The primary structure comprises 310 residues: Ribosomal RNA small subunit methyltransferase H (310 aa).

Residues 32–34, Asp-51, Phe-78, Asp-99, and Gln-106 contribute to the S-adenosyl-L-methionine site; that span reads AGH.

The protein belongs to the methyltransferase superfamily. RsmH family.

The protein localises to the cytoplasm. The catalysed reaction is cytidine(1402) in 16S rRNA + S-adenosyl-L-methionine = N(4)-methylcytidine(1402) in 16S rRNA + S-adenosyl-L-homocysteine + H(+). In terms of biological role, specifically methylates the N4 position of cytidine in position 1402 (C1402) of 16S rRNA. The protein is Ribosomal RNA small subunit methyltransferase H of Macrococcus caseolyticus (strain JCSC5402) (Macrococcoides caseolyticum).